The following is a 325-amino-acid chain: NADH-quinone oxidoreductase subunit H (325 aa).

The next 8 helical transmembrane spans lie at 11-31 (ILISVLKAVVILLVVVTCGAF), 81-101 (AIFTLAPVIAFTSLLLSFAIV), 114-134 (IGILFFLMMAGLAVYAVLFAG), 154-174 (LSYEVFLGLSLMGVVAQVGSF), 186-206 (VWNVIPQFFGFLTFAIAGVAV), 237-257 (FFVGEYIGIVTVSALIVTLFF), 265-285 (LPPFIWFALKTAFFMVMFILI), and 304-324 (VCLPLTLLNLLATAAVILYNA).

It belongs to the complex I subunit 1 family. In terms of assembly, NDH-1 is composed of 13 different subunits. Subunits NuoA, H, J, K, L, M, N constitute the membrane sector of the complex.

Its subcellular location is the cell inner membrane. It carries out the reaction a quinone + NADH + 5 H(+)(in) = a quinol + NAD(+) + 4 H(+)(out). NDH-1 shuttles electrons from NADH, via FMN and iron-sulfur (Fe-S) centers, to quinones in the respiratory chain. The immediate electron acceptor for the enzyme in this species is believed to be ubiquinone. Couples the redox reaction to proton translocation (for every two electrons transferred, four hydrogen ions are translocated across the cytoplasmic membrane), and thus conserves the redox energy in a proton gradient. This subunit may bind ubiquinone. This chain is NADH-quinone oxidoreductase subunit H, found in Yersinia pseudotuberculosis serotype O:3 (strain YPIII).